The sequence spans 172 residues: Austinoid biosynthesis clusters protein J (172 aa).

Belongs to the trt14 isomerase family. Homodimer.

The protein operates within secondary metabolite biosynthesis; terpenoid biosynthesis. Functionally, part of the gene cluster B that mediates the biosynthesis of the fungal meroterpenoid acetoxydehydroaustin. The first step of the pathway is the synthesis of 3,5-dimethylorsellinic acid by the polyketide synthase ausA. 3,5-dimethylorsellinic acid is then prenylated by the polyprenyl transferase ausN. Further epoxidation by the FAD-dependent monooxygenase ausM and cyclization by the probable terpene cyclase ausL lead to the formation of protoaustinoid A. Protoaustinoid A is then oxidized to spiro-lactone preaustinoid A3 by the combined action of the FAD-binding monooxygenases ausB and ausC, and the dioxygenase ausE. Acid-catalyzed keto-rearrangement and ring contraction of the tetraketide portion of preaustinoid A3 by ausJ lead to the formation of preaustinoid A4. The aldo-keto reductase ausK, with the help of ausH, is involved in the next step by transforming preaustinoid A4 into isoaustinone which is in turn hydroxylated by the P450 monooxygenase ausI to form austinolide. The cytochrome P450 monooxygenase ausG then modifies austinolide to austinol. Austinol is further acetylated to austin by the O-acetyltransferase ausP, which spontaneously changes to dehydroaustin. The cytochrome P450 monooxygenase then converts dehydroaustin is into 7-dehydrodehydroaustin. The hydroxylation catalyzed by ausR permits the second O-acetyltransferase ausQ to add an additional acetyl group to the molecule, leading to the formation of acetoxydehydroaustin. Due to genetic rearrangements of the clusters and the subsequent loss of some enzymes, the end product of the Penicillium brasilianum austinoid biosynthesis clusters is acetoxydehydroaustin. This Penicillium brasilianum protein is Austinoid biosynthesis clusters protein J.